We begin with the raw amino-acid sequence, 302 residues long: Ventral anterior homeobox 2a (302 aa).

Disordered regions lie at residues 1–35 (MFDQ…RDKG), 50–73 (KDIP…SQST), 156–175 (RRTK…SSST), 199–223 (PPNL…LGTS), and 282–302 (AFEP…KSTS). Positions 105–164 (PKRTRTSFTAEQLYRLELEFQRCQYVVGRERTELARQLNLSETQVKVWFQNRRTKQKKDQ) form a DNA-binding region, homeobox. Residues 161–172 (KKDQSRDSEKRS) show a composition bias toward basic and acidic residues. Over residues 204-223 (SSSQNNMGTSSGNGTNLGTS) the composition is skewed to low complexity. Residues 287–296 (TRLDRKDTAS) are compositionally biased toward basic and acidic residues.

It belongs to the EMX homeobox family.

Its subcellular location is the nucleus. In terms of biological role, transcription factor that may function in dorsoventral specification of the forebrain. Regulates the expression of Wnt signaling antagonists including the expression of a truncated tcf7l2 isoform that cannot bind ctnnb1 and acts therefore as a potent dominant-negative Wnt antagonist. Plays a crucial role in eye development and, in particular, in the specification of the ventral optic vesicle. May be a regulator of axial polarization in the retina. The protein is Ventral anterior homeobox 2a (vax2-a) of Xenopus laevis (African clawed frog).